The following is a 262-amino-acid chain: Small ribosomal subunit protein eS1 (262 aa).

The protein belongs to the eukaryotic ribosomal protein eS1 family. Component of the small ribosomal subunit. Mature ribosomes consist of a small (40S) and a large (60S) subunit. The 40S subunit contains about 33 different proteins and 1 molecule of RNA (18S). The 60S subunit contains about 49 different proteins and 3 molecules of RNA (25S, 5.8S and 5S).

Its subcellular location is the cytoplasm. The protein is Small ribosomal subunit protein eS1 of Brassica campestris (Field mustard).